The sequence spans 155 residues: Transcriptional repressor NrdR (155 aa).

Residues 3–34 (CPFCGNVDTQVKDSRPAEDHVSIRRRRFCPAC) fold into a zinc finger. Residues 49–139 (LVVIKTNGKR…VYKNFQAADD (91 aa)) form the ATP-cone domain.

It belongs to the NrdR family. Zn(2+) is required as a cofactor.

In terms of biological role, negatively regulates transcription of bacterial ribonucleotide reductase nrd genes and operons by binding to NrdR-boxes. This chain is Transcriptional repressor NrdR, found in Ruegeria sp. (strain TM1040) (Silicibacter sp.).